The sequence spans 103 residues: Large ribosomal subunit protein uL24 (103 aa).

It belongs to the universal ribosomal protein uL24 family. In terms of assembly, part of the 50S ribosomal subunit.

Functionally, one of two assembly initiator proteins, it binds directly to the 5'-end of the 23S rRNA, where it nucleates assembly of the 50S subunit. One of the proteins that surrounds the polypeptide exit tunnel on the outside of the subunit. The sequence is that of Large ribosomal subunit protein uL24 from Bacillus anthracis (strain A0248).